We begin with the raw amino-acid sequence, 97 residues long: Putative septation protein SpoVG (97 aa).

It belongs to the SpoVG family.

Its function is as follows. Could be involved in septation. The protein is Putative septation protein SpoVG of Borrelia garinii subsp. bavariensis (strain ATCC BAA-2496 / DSM 23469 / PBi) (Borreliella bavariensis).